The chain runs to 377 residues: Alanine racemase (377 aa).

Catalysis depends on K33, which acts as the Proton acceptor; specific for D-alanine. At K33 the chain carries N6-(pyridoxal phosphate)lysine. R134 contacts substrate. Y267 serves as the catalytic Proton acceptor; specific for L-alanine. M315 provides a ligand contact to substrate.

Belongs to the alanine racemase family. Pyridoxal 5'-phosphate is required as a cofactor.

The catalysed reaction is L-alanine = D-alanine. Its pathway is amino-acid biosynthesis; D-alanine biosynthesis; D-alanine from L-alanine: step 1/1. Functionally, catalyzes the interconversion of L-alanine and D-alanine. May also act on other amino acids. The polypeptide is Alanine racemase (alr) (Treponema pallidum subsp. pallidum (strain SS14)).